Reading from the N-terminus, the 257-residue chain is Dihydroorotate dehydrogenase B (NAD(+)), electron transfer subunit (257 aa).

The FAD-binding FR-type domain occupies 2 to 102; the sequence is IGRERMTVVS…LGPLGHGFPL (101 aa). FAD contacts are provided by residues 53 to 56, 70 to 72, and 77 to 78; these read RPLS, IYR, and GT. [2Fe-2S] cluster is bound by residues Cys-221, Cys-226, Cys-229, and Cys-244.

The protein belongs to the PyrK family. Heterotetramer of 2 PyrK and 2 PyrD type B subunits. The cofactor is [2Fe-2S] cluster. It depends on FAD as a cofactor.

Its pathway is pyrimidine metabolism; UMP biosynthesis via de novo pathway; orotate from (S)-dihydroorotate (NAD(+) route): step 1/1. Its function is as follows. Responsible for channeling the electrons from the oxidation of dihydroorotate from the FMN redox center in the PyrD type B subunit to the ultimate electron acceptor NAD(+). The protein is Dihydroorotate dehydrogenase B (NAD(+)), electron transfer subunit of Geobacillus thermodenitrificans (strain NG80-2).